The primary structure comprises 168 residues: Plastocyanin, chloroplastic (168 aa).

The N-terminal 70 residues, 1-70 (MASVAAAAVS…SSLLLVASAN (70 aa)), are a transit peptide targeting the chloroplast. Residues 71–168 (AATVKMGGDD…AGMKGVVTVS (98 aa)) form the Plastocyanin-like domain. H108, C153, H156, and M161 together coordinate Cu cation.

This sequence belongs to the plastocyanin family. The cofactor is Cu(2+).

Its subcellular location is the plastid. It localises to the chloroplast thylakoid membrane. Functionally, participates in electron transfer between P700 and the cytochrome b6-f complex in photosystem I. In Physcomitrium patens (Spreading-leaved earth moss), this protein is Plastocyanin, chloroplastic (PETE).